The chain runs to 2000 residues: Myosin-14 (2000 aa).

At Ala2 the chain carries N-acetylalanine. Thr33 bears the Phosphothreonine mark. Positions 47–97 (TARRMVWVPSELHGFEAAALRDEGEEEAEVELAESGRRLRLPRDQIQRMNP) constitute a Myosin N-terminal SH3-like domain. Ser56 is subject to Phosphoserine. The region spanning 101 to 804 (SKAEDMAELT…VLAQLEEERD (704 aa)) is the Myosin motor domain. 194–201 (GESGAGKT) serves as a coordination point for ATP. Residues 682–704 (LSRLMATLSNTNPSFVRCIVPNH) form an actin-binding region. The IQ domain occupies 807–836 (VTDIIVSFQAAARGYLARRAFQRRQQQQSA). Positions 866–1951 (LQVTRQDEVL…VTTLRNRLRR (1086 aa)) form a coiled coil. A Phosphoserine modification is found at Ser925. The segment at 1173–1197 (RGELEDTLDSTNAQQELRSKREQEV) is disordered. Phosphothreonine is present on Thr1198. Phosphoserine is present on residues Ser1249 and Ser1280. 5 disordered regions span residues 1260-1311 (ELSS…AELE), 1597-1629 (HERDLQGRDDAGEERRRQLAKQLRDAEVERDEE), 1720-1751 (SDRARRQAQQDRDEMAEEVASGNLSKAATLEE), 1910-1942 (AEEEASRAQAGRRRLQRELEDVTESAESMNREV), and 1967-2000 (LEEGVASDEEEAEGAEPGSAPGQEPEAPPPATPQ). Residues 1290 to 1304 (SDSERARSEAAEKLQ) are compositionally biased toward basic and acidic residues. Residues 1720-1732 (SDRARRQAQQDRD) show a composition bias toward basic and acidic residues. The segment covering 1971–1980 (VASDEEEAEG) has biased composition (acidic residues). 2 positions are modified to phosphoserine: Ser1973 and Ser1985. Low complexity predominate over residues 1981–1991 (AEPGSAPGQEP). Residue Thr1998 is modified to Phosphothreonine.

Belongs to the TRAFAC class myosin-kinesin ATPase superfamily. Myosin family. In terms of assembly, myosin is a hexameric protein that consists of 2 heavy chain subunits (MHC), 2 alkali light chain subunits (MLC) and 2 regulatory light chain subunits (MLC-2). As to expression, highest levels in lung, kidney, brain and colon, very low levels in liver and bladder and no expression in spleen or seminal vesicle (at protein level). Isoform 1 is expressed in liver, kidney and testis with low levels in skeletal muscle and heart. Isoform 1 and isoform 2 are expressed in brain and lung. Isoform 2 is the main isoform expressed in skeletal muscle and heart. Isoform 3 is limited to brain stem, cerebellum and spinal cord.

Its function is as follows. Cellular myosin that appears to play a role in cytokinesis, cell shape, and specialized functions such as secretion and capping. The sequence is that of Myosin-14 (Myh14) from Mus musculus (Mouse).